Here is a 630-residue protein sequence, read N- to C-terminus: Chaperone protein HtpG (630 aa).

Residues Met-1 to Arg-341 are a; substrate-binding. Residues Glu-342 to Arg-558 are b. Positions Met-559–Val-630 are c.

It belongs to the heat shock protein 90 family. Homodimer.

The protein resides in the cytoplasm. Molecular chaperone. Has ATPase activity. The chain is Chaperone protein HtpG from Bordetella avium (strain 197N).